The sequence spans 329 residues: Glycerol-3-phosphate dehydrogenase [NAD(P)+] (329 aa).

4 residues coordinate NADPH: S13, W14, H34, and K105. 3 residues coordinate sn-glycerol 3-phosphate: K105, G134, and S136. Residue A138 coordinates NADPH. Residues K189, D242, S252, R253, and N254 each coordinate sn-glycerol 3-phosphate. K189 serves as the catalytic Proton acceptor. R253 contributes to the NADPH binding site. 2 residues coordinate NADPH: V277 and E279.

It belongs to the NAD-dependent glycerol-3-phosphate dehydrogenase family.

The protein resides in the cytoplasm. It carries out the reaction sn-glycerol 3-phosphate + NAD(+) = dihydroxyacetone phosphate + NADH + H(+). The catalysed reaction is sn-glycerol 3-phosphate + NADP(+) = dihydroxyacetone phosphate + NADPH + H(+). The protein operates within membrane lipid metabolism; glycerophospholipid metabolism. Catalyzes the reduction of the glycolytic intermediate dihydroxyacetone phosphate (DHAP) to sn-glycerol 3-phosphate (G3P), the key precursor for phospholipid synthesis. The polypeptide is Glycerol-3-phosphate dehydrogenase [NAD(P)+] (Legionella pneumophila (strain Corby)).